Here is a 388-residue protein sequence, read N- to C-terminus: Coproporphyrin III ferrochelatase (388 aa).

Positions 59 and 124 each coordinate Fe-coproporphyrin III. Residues His186 and Glu276 each contribute to the Fe(2+) site. Positions Gln349–Asp369 are disordered.

Belongs to the ferrochelatase family.

It is found in the cytoplasm. The enzyme catalyses Fe-coproporphyrin III + 2 H(+) = coproporphyrin III + Fe(2+). It participates in porphyrin-containing compound metabolism; protoheme biosynthesis. Functionally, involved in coproporphyrin-dependent heme b biosynthesis. Catalyzes the insertion of ferrous iron into coproporphyrin III to form Fe-coproporphyrin III. In Frankia alni (strain DSM 45986 / CECT 9034 / ACN14a), this protein is Coproporphyrin III ferrochelatase.